We begin with the raw amino-acid sequence, 129 residues long: Small ribosomal subunit protein uS11 (129 aa).

The protein belongs to the universal ribosomal protein uS11 family. As to quaternary structure, part of the 30S ribosomal subunit. Interacts with proteins S7 and S18. Binds to IF-3.

Located on the platform of the 30S subunit, it bridges several disparate RNA helices of the 16S rRNA. Forms part of the Shine-Dalgarno cleft in the 70S ribosome. The protein is Small ribosomal subunit protein uS11 of Hamiltonella defensa subsp. Acyrthosiphon pisum (strain 5AT).